The following is a 177-amino-acid chain: MAELATIARPYAEALFRVAKAADLNGWSELVSEMAQVAAHPDVYALAHNPKISDDVISSAFISALKSPVGAEAKNFINMLVQNDRLTLLPEIATQFHALKNAQEGAADAEIVSAFELSAAQLTELVATLEKKFGRKLNPTVAVDSALIGGVRVVVGDEVLDTSVRAKLQQMQVALTA.

This sequence belongs to the ATPase delta chain family. F-type ATPases have 2 components, F(1) - the catalytic core - and F(0) - the membrane proton channel. F(1) has five subunits: alpha(3), beta(3), gamma(1), delta(1), epsilon(1). F(0) has three main subunits: a(1), b(2) and c(10-14). The alpha and beta chains form an alternating ring which encloses part of the gamma chain. F(1) is attached to F(0) by a central stalk formed by the gamma and epsilon chains, while a peripheral stalk is formed by the delta and b chains.

Its subcellular location is the cell inner membrane. Functionally, f(1)F(0) ATP synthase produces ATP from ADP in the presence of a proton or sodium gradient. F-type ATPases consist of two structural domains, F(1) containing the extramembraneous catalytic core and F(0) containing the membrane proton channel, linked together by a central stalk and a peripheral stalk. During catalysis, ATP synthesis in the catalytic domain of F(1) is coupled via a rotary mechanism of the central stalk subunits to proton translocation. This protein is part of the stalk that links CF(0) to CF(1). It either transmits conformational changes from CF(0) to CF(1) or is implicated in proton conduction. This Herminiimonas arsenicoxydans protein is ATP synthase subunit delta.